A 799-amino-acid polypeptide reads, in one-letter code: High affinity nerve growth factor receptor (799 aa).

A signal peptide spans 1–33 (MLRGQRLGQLGWHRPAAGLGSLMTSLMLACASA). Residues 34–420 (ASCREVCCPV…VEKKDETPFG (387 aa)) are Extracellular-facing. 2 disulfide bridges follow: Cys36-Cys41 and Cys40-Cys50. N-linked (GlcNAc...) asparagine glycosylation occurs at Asn67. 2 LRR repeats span residues 90 to 113 (LGELRSLTIVKSGLRFVAPDAFRF) and 116 to 137 (RLSHLNLSSNALESLSWKTVQG). Asn121, Asn190, Asn204, Asn255, Asn264, Asn320, Asn325, Asn341, Asn361, and Asn404 each carry an N-linked (GlcNAc...) asparagine glycan. The LRRCT domain occupies 148-219 (NPLHCSCALF…GDDVFLQCQV (72 aa)). Residues Cys154 and Cys193 are joined by a disulfide bond. 2 Ig-like C2-type domains span residues 196–285 (PTVK…VSVS) and 205–368 (DSVE…LAAN). 2 disulfide bridges follow: Cys217/Cys267 and Cys302/Cys348. A helical transmembrane segment spans residues 421-441 (VSVAVGLAVSAALFLSALLLV). At 442–799 (LNKCGQRSKF…APPSYLDVLG (358 aa)) the chain is on the cytoplasmic side. Residues 472–493 (MTLGGSSLSPTEGKGSGLQGHI) are interaction with SQSTM1. At Tyr499 the chain carries Phosphotyrosine; by autocatalysis. The Protein kinase domain occupies 513–784 (IILKWELGEG…LSMKDVHARL (272 aa)). Residues 519-527 (LGEGAFGKV) and Lys547 each bind ATP. The Proton acceptor role is filled by Asp653. Phosphotyrosine; by autocatalysis occurs at positions 679, 683, 684, and 794.

This sequence belongs to the protein kinase superfamily. Tyr protein kinase family. Insulin receptor subfamily. In terms of assembly, exists in a dynamic equilibrium between monomeric (low affinity) and dimeric (high affinity) structures. Homodimerization is induced by binding of a NGF dimer. Found in a complex, at least composed of KIDINS220, MAGI2, NTRK1 and RAPGEF2; the complex is mainly formed at late endosomes in a nerve growth factor (NGF)-dependent manner. Interacts with RAPGEF2; the interaction is strengthened after NGF stimulation. Interacts with SQSTM1; bridges NTRK1 to NGFR. Forms a ternary complex with NGFR and KIDINS220; this complex is affected by the expression levels of KIDINS220 and an increase in KIDINS220 expression leads to a decreased association of NGFR and NTRK1. Interacts (phosphorylated upon activation by NGF) with SHC1; mediates SHC1 phosphorylation and activation. Interacts (phosphorylated upon activation by NGF) with PLCG1; mediates PLCG1 phosphorylation and activation. Interacts (phosphorylated) with SH2B1 and SH2B2. Interacts with GRB2. Interacts with PIK3R1. Interacts with FRS2. Interacts with SORT1; may regulate NTRK1 anterograde axonal transport. Interacts with SH2D1A; regulates NTRK1. Interacts with NRADD. Interacts with RAB7A. Interacts with PTPRS. Interacts with USP36; USP36 does not deubiquitinate NTRK1. Interacts with GGA3. Interacts with TSPAN1; this interaction promotes NTRK1 stability. In terms of processing, ligand-mediated autophosphorylation. Interaction with SQSTM1 is phosphotyrosine-dependent. Autophosphorylation at Tyr-499 mediates interaction and phosphorylation of SHC1. Post-translationally, N-glycosylated. Ubiquitinated. Undergoes polyubiquitination upon activation; regulated by NGFR. Ubiquitination by NEDD4L leads to degradation. Ubiquitination regulates the internalization of the receptor.

The protein resides in the cell membrane. It localises to the early endosome membrane. Its subcellular location is the late endosome membrane. It is found in the recycling endosome membrane. The enzyme catalyses L-tyrosyl-[protein] + ATP = O-phospho-L-tyrosyl-[protein] + ADP + H(+). Its activity is regulated as follows. The pro-survival signaling effect of NTRK1 in neurons requires its endocytosis into signaling early endosomes and its retrograde axonal transport. This is regulated by different proteins including CFL1, RAC1 and SORT1. NTF3 is unable to induce this signaling probably due to the lability of the NTF3-NTRK1 complex in endosomes. SH2D1A inhibits the autophosphorylation of the receptor, and alters the recruitment and activation of downstream effectors and signaling cascades. Regulated by NGFR. In terms of biological role, receptor tyrosine kinase involved in the development and the maturation of the central and peripheral nervous systems through regulation of proliferation, differentiation and survival of sympathetic and nervous neurons. High affinity receptor for NGF which is its primary ligand, it can also bind and be activated by NTF3/neurotrophin-3. However, NTF3 only supports axonal extension through NTRK1 but has no effect on neuron survival. Upon dimeric NGF ligand-binding, undergoes homodimerization, autophosphorylation and activation. Recruits, phosphorylates and/or activates several downstream effectors including SHC1, FRS2, SH2B1, SH2B2 and PLCG1 that regulate distinct overlapping signaling cascades driving cell survival and differentiation. Through SHC1 and FRS2 activates a GRB2-Ras-MAPK cascade that regulates cell differentiation and survival. Through PLCG1 controls NF-Kappa-B activation and the transcription of genes involved in cell survival. Through SHC1 and SH2B1 controls a Ras-PI3 kinase-AKT1 signaling cascade that is also regulating survival. In absence of ligand and activation, may promote cell death, making the survival of neurons dependent on trophic factors. The protein is High affinity nerve growth factor receptor (Ntrk1) of Mus musculus (Mouse).